The sequence spans 308 residues: Ribosomal RNA small subunit methyltransferase H (308 aa).

S-adenosyl-L-methionine contacts are provided by residues glycine 35–histidine 37, aspartate 54, phenylalanine 80, aspartate 101, and glutamine 108.

This sequence belongs to the methyltransferase superfamily. RsmH family.

The protein localises to the cytoplasm. It catalyses the reaction cytidine(1402) in 16S rRNA + S-adenosyl-L-methionine = N(4)-methylcytidine(1402) in 16S rRNA + S-adenosyl-L-homocysteine + H(+). Its function is as follows. Specifically methylates the N4 position of cytidine in position 1402 (C1402) of 16S rRNA. The chain is Ribosomal RNA small subunit methyltransferase H from Mycoplasma pneumoniae (strain ATCC 29342 / M129 / Subtype 1) (Mycoplasmoides pneumoniae).